Here is an 845-residue protein sequence, read N- to C-terminus: Sarcolemmal membrane-associated protein (845 aa).

The tract at residues 1–163 is necessary for targeting to centrosomes; sequence MPSALAIFTC…AANTPSMYSQ (163 aa). The Cytoplasmic segment spans residues 1–819; it reads MPSALAIFTC…REKGNNKPWP (819 aa). The region spanning 28–85 is the FHA domain; that stretch reads IKIGRSVARCRPAQNNATFDCKVLSRNHALVWFDHKTSKFYLQDTKSSNGTFINSQRL. A helical; Anchor for type IV membrane protein membrane pass occupies residues 28 to 85; sequence IKIGRSVARCRPAQNNATFDCKVLSRNHALVWFDHKTSKFYLQDTKSSNGTFINSQRL. Serine 148 bears the Phosphoserine mark. Coiled-coil stretches lie at residues 167–202 and 231–388; these read QLSQYLQEALHREQMLEQKLATLQRLLAITQEASDT and QTED…QEKT. Residues 339–359 form a helical; Anchor for type IV membrane protein membrane-spanning segment; sequence KKELQTKIDEMEEKEQELQAK. Basic and acidic residues predominate over residues 451–463; the sequence is LSKENQAKAKESD. The tract at residues 451–484 is disordered; sequence LSKENQAKAKESDLSDTLSPSKEKSSDDTTDAQM. A phosphoserine mark is found at serine 465 and serine 469. Positions 506–816 form a coiled coil; it reads TQSETEAKQD…KLLREKGNNK (311 aa). The helical; Anchor for type IV membrane protein transmembrane segment at 820 to 840 threads the bilayer; sequence WMPMLAALVAVTAMVLYVPGL. Topologically, residues 841-845 are extracellular; it reads ARASP.

It belongs to the SLMAP family. Homodimer. Interacts with myosin. Interacts with SIKE1 and both associate with the STRIPAK core complex composed of PP2A catalytic and scaffolding subunits, the striatins (PP2A regulatory subunits), the striatin-associated proteins MOB4, STRIP1 and STRIP2, PDCD10 and members of the STE20 kinases, such as STK24 and STK26. Interacts (via FHA domain) with STK3 (when phosphorylated); the interaction associates STK3 with the STRIPAK complex. As to expression, expressed in proliferating myoblasts and differentiated myotubes (at protein level). Expressed in myoblasts, cardiac and skeletal muscles.

It is found in the cell membrane. The protein localises to the sarcolemma. The protein resides in the cytoplasm. Its subcellular location is the myofibril. It localises to the sarcomere. It is found in the m line. The protein localises to the z line. The protein resides in the cytoskeleton. Its subcellular location is the microtubule organizing center. It localises to the centrosome. It is found in the endoplasmic reticulum membrane. The protein localises to the mitochondrion membrane. In terms of biological role, associates with the striatin-interacting phosphatase and kinase (STRIPAK) core complex, forming the extended (SIKE1:SLMAP)STRIPAK complex. The (SIKE1:SLMAP)STRIPAK complex dephosphorylates STK3 leading to the inhibition of Hippo signaling and the control of cell growth. May play a role during myoblast fusion. The sequence is that of Sarcolemmal membrane-associated protein (Slmap) from Mus musculus (Mouse).